We begin with the raw amino-acid sequence, 398 residues long: Tryptophan synthase beta chain (398 aa).

N6-(pyridoxal phosphate)lysine is present on lysine 89.

It belongs to the TrpB family. Tetramer of two alpha and two beta chains. Pyridoxal 5'-phosphate serves as cofactor.

It carries out the reaction (1S,2R)-1-C-(indol-3-yl)glycerol 3-phosphate + L-serine = D-glyceraldehyde 3-phosphate + L-tryptophan + H2O. It functions in the pathway amino-acid biosynthesis; L-tryptophan biosynthesis; L-tryptophan from chorismate: step 5/5. Its function is as follows. The beta subunit is responsible for the synthesis of L-tryptophan from indole and L-serine. The protein is Tryptophan synthase beta chain of Methanopyrus kandleri (strain AV19 / DSM 6324 / JCM 9639 / NBRC 100938).